We begin with the raw amino-acid sequence, 238 residues long: Sugar fermentation stimulation protein homolog (238 aa).

The protein belongs to the SfsA family.

This Haemophilus influenzae (strain ATCC 51907 / DSM 11121 / KW20 / Rd) protein is Sugar fermentation stimulation protein homolog.